The sequence spans 239 residues: Purine nucleoside phosphorylase DeoD-type (239 aa).

Position 5 (histidine 5) interacts with a purine D-ribonucleoside. Residues glycine 21, arginine 25, arginine 44, and 88–91 (RVGS) contribute to the phosphate site. A purine D-ribonucleoside-binding positions include 180 to 182 (EME) and 204 to 205 (SD). The active-site Proton donor is the aspartate 205.

It belongs to the PNP/UDP phosphorylase family. Homohexamer; trimer of homodimers.

It carries out the reaction a purine D-ribonucleoside + phosphate = a purine nucleobase + alpha-D-ribose 1-phosphate. The enzyme catalyses a purine 2'-deoxy-D-ribonucleoside + phosphate = a purine nucleobase + 2-deoxy-alpha-D-ribose 1-phosphate. Catalyzes the reversible phosphorolytic breakdown of the N-glycosidic bond in the beta-(deoxy)ribonucleoside molecules, with the formation of the corresponding free purine bases and pentose-1-phosphate. This Salmonella choleraesuis (strain SC-B67) protein is Purine nucleoside phosphorylase DeoD-type.